The primary structure comprises 298 residues: Ribosomal RNA small subunit methyltransferase H (298 aa).

Residues 35–37 (GGH), Asp55, Phe82, Asp100, and Gln107 each bind S-adenosyl-L-methionine.

Belongs to the methyltransferase superfamily. RsmH family.

The protein resides in the cytoplasm. The enzyme catalyses cytidine(1402) in 16S rRNA + S-adenosyl-L-methionine = N(4)-methylcytidine(1402) in 16S rRNA + S-adenosyl-L-homocysteine + H(+). Specifically methylates the N4 position of cytidine in position 1402 (C1402) of 16S rRNA. This chain is Ribosomal RNA small subunit methyltransferase H, found in Chlamydia felis (strain Fe/C-56) (Chlamydophila felis).